The sequence spans 217 residues: Octanoyltransferase (217 aa).

One can recognise a BPL/LPL catalytic domain in the interval 32 to 207 (DDSADEIWLV…HMIKKLNATQ (176 aa)). Substrate is bound by residues 71-78 (RGGQVTYH), 138-140 (SLG), and 151-153 (GLA). Cys169 (acyl-thioester intermediate) is an active-site residue.

It belongs to the LipB family.

The protein resides in the cytoplasm. It catalyses the reaction octanoyl-[ACP] + L-lysyl-[protein] = N(6)-octanoyl-L-lysyl-[protein] + holo-[ACP] + H(+). It functions in the pathway protein modification; protein lipoylation via endogenous pathway; protein N(6)-(lipoyl)lysine from octanoyl-[acyl-carrier-protein]: step 1/2. Its function is as follows. Catalyzes the transfer of endogenously produced octanoic acid from octanoyl-acyl-carrier-protein onto the lipoyl domains of lipoate-dependent enzymes. Lipoyl-ACP can also act as a substrate although octanoyl-ACP is likely to be the physiological substrate. The sequence is that of Octanoyltransferase from Pseudoalteromonas translucida (strain TAC 125).